Here is a 248-residue protein sequence, read N- to C-terminus: Probable transcriptional regulatory protein PLES_43501 (248 aa).

The protein belongs to the TACO1 family.

It is found in the cytoplasm. The chain is Probable transcriptional regulatory protein PLES_43501 from Pseudomonas aeruginosa (strain LESB58).